We begin with the raw amino-acid sequence, 184 residues long: Photosystem I assembly protein Ycf4 (184 aa).

2 consecutive transmembrane segments (helical) span residues 22 to 42 (FCWAIILFLGSLGFLLIGISS) and 57 to 77 (IIFFPQGLVMSFYGLAGLFIS).

It belongs to the Ycf4 family.

It is found in the plastid. The protein localises to the chloroplast thylakoid membrane. Seems to be required for the assembly of the photosystem I complex. This is Photosystem I assembly protein Ycf4 from Populus alba (White poplar).